Consider the following 261-residue polypeptide: Phosphatidylglycerol--prolipoprotein diacylglyceryl transferase (261 aa).

3 helical membrane-spanning segments follow: residues 20-40 (LAIH…VWLA), 54-74 (IIDF…LYYV), and 88-108 (IIAI…GAIV). Arg139 lines the a 1,2-diacyl-sn-glycero-3-phospho-(1'-sn-glycerol) pocket. Transmembrane regions (helical) follow at residues 175-195 (MPTF…VMVF) and 235-255 (ARVS…LFVY).

Belongs to the Lgt family.

It localises to the cell membrane. The catalysed reaction is L-cysteinyl-[prolipoprotein] + a 1,2-diacyl-sn-glycero-3-phospho-(1'-sn-glycerol) = an S-1,2-diacyl-sn-glyceryl-L-cysteinyl-[prolipoprotein] + sn-glycerol 1-phosphate + H(+). The protein operates within protein modification; lipoprotein biosynthesis (diacylglyceryl transfer). Functionally, catalyzes the transfer of the diacylglyceryl group from phosphatidylglycerol to the sulfhydryl group of the N-terminal cysteine of a prolipoprotein, the first step in the formation of mature lipoproteins. The sequence is that of Phosphatidylglycerol--prolipoprotein diacylglyceryl transferase from Lactococcus lactis subsp. cremoris (strain MG1363).